We begin with the raw amino-acid sequence, 341 residues long: Glycerol-3-phosphate dehydrogenase [NAD(P)+] (341 aa).

Serine 14, phenylalanine 15, arginine 35, and lysine 108 together coordinate NADPH. The sn-glycerol 3-phosphate site is built by lysine 108 and glycine 136. Residue serine 140 coordinates NADPH. Sn-glycerol 3-phosphate is bound by residues lysine 191, aspartate 244, serine 254, arginine 255, and asparagine 256. Catalysis depends on lysine 191, which acts as the Proton acceptor. Arginine 255 serves as a coordination point for NADPH. Valine 279 and glutamate 281 together coordinate NADPH.

It belongs to the NAD-dependent glycerol-3-phosphate dehydrogenase family.

The protein localises to the cytoplasm. It carries out the reaction sn-glycerol 3-phosphate + NAD(+) = dihydroxyacetone phosphate + NADH + H(+). The enzyme catalyses sn-glycerol 3-phosphate + NADP(+) = dihydroxyacetone phosphate + NADPH + H(+). It functions in the pathway membrane lipid metabolism; glycerophospholipid metabolism. Functionally, catalyzes the reduction of the glycolytic intermediate dihydroxyacetone phosphate (DHAP) to sn-glycerol 3-phosphate (G3P), the key precursor for phospholipid synthesis. The polypeptide is Glycerol-3-phosphate dehydrogenase [NAD(P)+] (Pseudomonas putida (strain GB-1)).